Consider the following 243-residue polypeptide: Anti-H(O) lectin 2 (243 aa).

A glycan (N-linked (GlcNAc...) asparagine) is linked at asparagine 115. 2 residues coordinate Mn(2+): glutamate 127 and aspartate 129. 3 residues coordinate Ca(2+): aspartate 129, asparagine 136, and aspartate 139. Mn(2+) contacts are provided by aspartate 139 and histidine 144.

This sequence belongs to the leguminous lectin family. In terms of assembly, homodimer.

Lactose- or galactose-binding anti-H(O) lectin. The polypeptide is Anti-H(O) lectin 2 (Cytisophyllum sessilifolium (Sessile-leaved cytisus)).